The following is a 99-amino-acid chain: Aspartyl/glutamyl-tRNA(Asn/Gln) amidotransferase subunit C (99 aa).

The protein belongs to the GatC family. As to quaternary structure, heterotrimer of A, B and C subunits.

It carries out the reaction L-glutamyl-tRNA(Gln) + L-glutamine + ATP + H2O = L-glutaminyl-tRNA(Gln) + L-glutamate + ADP + phosphate + H(+). The enzyme catalyses L-aspartyl-tRNA(Asn) + L-glutamine + ATP + H2O = L-asparaginyl-tRNA(Asn) + L-glutamate + ADP + phosphate + 2 H(+). Allows the formation of correctly charged Asn-tRNA(Asn) or Gln-tRNA(Gln) through the transamidation of misacylated Asp-tRNA(Asn) or Glu-tRNA(Gln) in organisms which lack either or both of asparaginyl-tRNA or glutaminyl-tRNA synthetases. The reaction takes place in the presence of glutamine and ATP through an activated phospho-Asp-tRNA(Asn) or phospho-Glu-tRNA(Gln). In Leptothrix cholodnii (strain ATCC 51168 / LMG 8142 / SP-6) (Leptothrix discophora (strain SP-6)), this protein is Aspartyl/glutamyl-tRNA(Asn/Gln) amidotransferase subunit C.